We begin with the raw amino-acid sequence, 464 residues long: Soluble pyridine nucleotide transhydrogenase (464 aa).

35–44 (DSRRQVGGNC) contacts FAD.

The protein belongs to the class-I pyridine nucleotide-disulfide oxidoreductase family. It depends on FAD as a cofactor.

The protein localises to the cytoplasm. It catalyses the reaction NAD(+) + NADPH = NADH + NADP(+). Conversion of NADPH, generated by peripheral catabolic pathways, to NADH, which can enter the respiratory chain for energy generation. The chain is Soluble pyridine nucleotide transhydrogenase from Pseudomonas fluorescens (strain Pf0-1).